A 343-amino-acid polypeptide reads, in one-letter code: N-acetyl-gamma-glutamyl-phosphate reductase (343 aa).

Residue cysteine 149 is part of the active site.

It belongs to the NAGSA dehydrogenase family. Type 1 subfamily.

The protein localises to the cytoplasm. The catalysed reaction is N-acetyl-L-glutamate 5-semialdehyde + phosphate + NADP(+) = N-acetyl-L-glutamyl 5-phosphate + NADPH + H(+). Its pathway is amino-acid biosynthesis; L-arginine biosynthesis; N(2)-acetyl-L-ornithine from L-glutamate: step 3/4. Its function is as follows. Catalyzes the NADPH-dependent reduction of N-acetyl-5-glutamyl phosphate to yield N-acetyl-L-glutamate 5-semialdehyde. In Methanococcus maripaludis (strain C7 / ATCC BAA-1331), this protein is N-acetyl-gamma-glutamyl-phosphate reductase.